Reading from the N-terminus, the 277-residue chain is Pantothenate synthetase (277 aa).

28–35 (MGALHSGH) provides a ligand contact to ATP. Histidine 35 acts as the Proton donor in catalysis. Glutamine 59 contributes to the (R)-pantoate binding site. Position 59 (glutamine 59) interacts with beta-alanine. Residues 145–148 (GEKD), valine 174, and 182–185 (LSSR) contribute to the ATP site.

This sequence belongs to the pantothenate synthetase family. Homodimer.

The protein resides in the cytoplasm. It carries out the reaction (R)-pantoate + beta-alanine + ATP = (R)-pantothenate + AMP + diphosphate + H(+). The protein operates within cofactor biosynthesis; (R)-pantothenate biosynthesis; (R)-pantothenate from (R)-pantoate and beta-alanine: step 1/1. Functionally, catalyzes the condensation of pantoate with beta-alanine in an ATP-dependent reaction via a pantoyl-adenylate intermediate. The sequence is that of Pantothenate synthetase from Anaplasma marginale (strain St. Maries).